A 482-amino-acid polypeptide reads, in one-letter code: MKGLFLRIITALALLFWAIDMVFPWQFLRHTEENHYTAIQARGSLYVGTINNQISYFINKDSERGFEYELAKAFADTLGVELEMKIFDNQEQLFDELDKHNIDLAAAHLLYHPKNAERFQIGPAYHSASWQLAYRKNENRPKNLGNVKKDIYISNNLALEETLKELQKQYPQLTWKRNQALTQEELLLQLAEGKIPYVIANSIDIAAIQQIKPELAIAFDITDEANVHWYLPNSPYRDLQTALLNFMNNAEETGLLDNLKEKYLGHISQFDYVDTRSYMNAIENTLPQFSPLFEKYKGELDWRLLAAVAYQESHWNPDATSPTGVRGIMMLTKNTAQHMKISDRTDPEQSIKAGSEYLHWLISQLPESIEKEERIWFALVAYNIGLGHLIDARRLTQNLGGNPDNWLNVKKNLPLLAEKRYYSQLKYGYARGYEAYQYVENIRRYMNSIVNYHRVQENQTTNDNANNESAVKNLEEIKENKD.

An N-terminal signal peptide occupies residues Met-1–Ala-18. The non-LT domain stretch occupies residues Ile-19–Ile-267. Residues Ser-268–Asp-482 are LT domain. Glu-312 is a catalytic residue. A compositionally biased stretch (polar residues) spans Glu-457–Ala-470. The segment at Glu-457 to Asp-482 is disordered. Residues Asn-473–Asp-482 are compositionally biased toward basic and acidic residues.

In the N-terminal section; belongs to the bacterial solute-binding protein 3 family. This sequence in the C-terminal section; belongs to the transglycosylase Slt family.

The protein resides in the cell outer membrane. The catalysed reaction is Exolytic cleavage of the (1-&gt;4)-beta-glycosidic linkage between N-acetylmuramic acid (MurNAc) and N-acetylglucosamine (GlcNAc) residues in peptidoglycan, from either the reducing or the non-reducing ends of the peptidoglycan chains, with concomitant formation of a 1,6-anhydrobond in the MurNAc residue.. Functionally, murein-degrading enzyme that degrades murein glycan strands and insoluble, high-molecular weight murein sacculi, with the concomitant formation of a 1,6-anhydromuramoyl product. Lytic transglycosylases (LTs) play an integral role in the metabolism of the peptidoglycan (PG) sacculus. Their lytic action creates space within the PG sacculus to allow for its expansion as well as for the insertion of various structures such as secretion systems and flagella. This is Membrane-bound lytic murein transglycosylase F from Haemophilus influenzae (strain 86-028NP).